Here is a 174-residue protein sequence, read N- to C-terminus: Transmembrane protein 208 (174 aa).

3 consecutive transmembrane segments (helical) span residues 30 to 50 (NMAIGCAAPALLLSFLVFEVT), 54 to 74 (VFMHILSLLILGSSYQFMAFM), and 111 to 131 (GTLLLALISNYFWLVLLLAPI). The tract at residues 151 to 174 (AQDDNPQVDEKKQKKMDRRMRRMR) is disordered. Residues 163 to 174 (QKKMDRRMRRMR) are compositionally biased toward basic residues.

It belongs to the TMEM208 family. In terms of assembly, interacts with fz. As to expression, expressed in the brain.

It is found in the endoplasmic reticulum membrane. Functionally, may play an important role during development and helps to maintain proper levels of Fz. The polypeptide is Transmembrane protein 208 (Drosophila melanogaster (Fruit fly)).